A 1253-amino-acid polypeptide reads, in one-letter code: Elongator complex protein 1 (1253 aa).

Positions 830–1253 (VDVNMLFDHA…KPFEKLSILI (424 aa)) are mediates dimerization. A compositionally biased stretch (polar residues) spans 1126–1141 (YTKSSNSSKMTRNTSK). Positions 1126–1153 (YTKSSNSSKMTRNTSKNNRRLERKRARG) are disordered. A required for binding to tRNA region spans residues 1137-1155 (RNTSKNNRRLERKRARGKK). Residues 1142–1153 (NNRRLERKRARG) are compositionally biased toward basic residues.

This sequence belongs to the ELP1/IKA1 family. As to quaternary structure, homodimer. Component of the elongator complex.

The protein localises to the cytoplasm. The protein operates within tRNA modification; 5-methoxycarbonylmethyl-2-thiouridine-tRNA biosynthesis. Component of the elongator complex, a multiprotein complex which is required for multiple tRNA modifications, including mcm5U (5-methoxycarbonylmethyl uridine), mcm5s2U (5-methoxycarbonylmethyl-2-thiouridine), and ncm5U (5-carbamoylmethyl uridine). The elongator complex catalyzes formation of carboxymethyluridine in the wobble base at position 34 in tRNAs. ELP1 binds to tRNA, mediating interaction of the elongator complex with tRNA. The sequence is that of Elongator complex protein 1 from Schizosaccharomyces pombe (strain 972 / ATCC 24843) (Fission yeast).